A 273-amino-acid chain; its full sequence is Protein BRANCHLESS TRICHOME (273 aa).

The span at 1–12 (MKDMKMQSSPET) shows a compositional bias: polar residues. A disordered region spans residues 1-30 (MKDMKMQSSPETMMTRIPTPDPHSTGVRED). Residues 69–199 (IKVFMESELG…GERERNRMMK (131 aa)) adopt a coiled-coil conformation.

Interacts with STI.

Acts as a key regulator of trichome branching. Could participate with STI in the same pathway. Also plays a role in integrating endoreplication levels with cell shape. The chain is Protein BRANCHLESS TRICHOME (BLT) from Arabidopsis thaliana (Mouse-ear cress).